The following is a 530-amino-acid chain: MKGTLSVLCLVLLVSVLEAAVTKPKFGDFIGCLRYRTSPENPITDAISFADNTTTFLSSYVSYTKNKRFSTPNYRKLLAIVAAKHVSHVQATVVCAKSNGIQLRIRSGGHDYEGLSYMSSVPFVILDMYNLRSITVDVSSKKAWIQAGATLGELYTNVNDVSQTLAFPAGVCATVGAGGHISGGGYGNLMRKYGITVDHVIDAQIIDVNGKLLNRATMGEDLFWAIRGGGGGSFGVILSWKINLVDVPKIVTVFKVNKTLEQGGTDVLYKWQLVASKFPESLFVRAMPQVANGTKRGERTITVVFYAQFLGRTDALMAIMNQNWPELGLKHEDCQEMSWLNSTLFWADYPAGTPTSILLDRPSSPGDFFKSKSDYVKKPIPKEGLEKLWKTMLKFNNNIVWMQFNPYGGVMDRIPATATAFPHRKGNLFKIQYFTTWFNANATMSSLSQMKELYEVAEPYVSSNPREAFFNYRDIDVGSNPSGETNVDEAKIYGSKYFLGNLKRLMDVKAKYDPDNFFKNEQSIPPVRVM.

The first 19 residues, 1-19, serve as a signal peptide directing secretion; that stretch reads MKGTLSVLCLVLLVSVLEA. A disulfide bridge links cysteine 32 with cysteine 95. A glycan (N-linked (GlcNAc...) asparagine) is linked at asparagine 52. Positions 73–247 constitute an FAD-binding PCMH-type domain; the sequence is NYRKLLAIVA…LSWKINLVDV (175 aa). The 6-(S-cysteinyl)-8alpha-(pros-histidyl)-FAD (His-Cys) cross-link spans 110–172; that stretch reads HDYEGLSYMS…QTLAFPAGVC (63 aa). 4 N-linked (GlcNAc...) asparagine glycosylation sites follow: asparagine 257, asparagine 292, asparagine 341, and asparagine 441.

This sequence belongs to the oxygen-dependent FAD-linked oxidoreductase family. Requires FAD as cofactor. In terms of processing, the FAD cofactor is bound via a bicovalent 6-S-cysteinyl, 8alpha-N1-histidyl FAD linkage.

It localises to the secreted. The protein resides in the cell wall. In terms of biological role, probable flavin-dependent oxidoreductase. The chain is Berberine bridge enzyme-like 4 from Arabidopsis thaliana (Mouse-ear cress).